The sequence spans 284 residues: Pantothenate synthetase (284 aa).

30–37 (MGNLHEGH) is a binding site for ATP. His-37 acts as the Proton donor in catalysis. Gln-61 contributes to the (R)-pantoate binding site. Position 61 (Gln-61) interacts with beta-alanine. Position 149-152 (149-152 (GEKD)) interacts with ATP. Gln-155 provides a ligand contact to (R)-pantoate. ATP-binding positions include Val-178 and 186-189 (LSSR).

It belongs to the pantothenate synthetase family. As to quaternary structure, homodimer.

The protein localises to the cytoplasm. It catalyses the reaction (R)-pantoate + beta-alanine + ATP = (R)-pantothenate + AMP + diphosphate + H(+). Its pathway is cofactor biosynthesis; (R)-pantothenate biosynthesis; (R)-pantothenate from (R)-pantoate and beta-alanine: step 1/1. In terms of biological role, catalyzes the condensation of pantoate with beta-alanine in an ATP-dependent reaction via a pantoyl-adenylate intermediate. The protein is Pantothenate synthetase of Yersinia pseudotuberculosis serotype O:1b (strain IP 31758).